A 224-amino-acid chain; its full sequence is Oxalate oxidase 2 (224 aa).

The N-terminal stretch at Met1–Ala23 is a signal peptide. Cysteines 33 and 49 form a disulfide. The Cupin type-1 domain occupies Ser63–Glu214. 2 N-linked (GlcNAc...) asparagine glycosylation sites follow: Asn70 and Asn75. The Mn(2+) site is built by His111, His113, Glu118, and His160.

This sequence belongs to the germin family. In terms of assembly, oligomer (believed to be a pentamer but probably hexamer). Post-translationally, glycosylated. A form called G contains antennary GlcNAc residues, whereas a form called G' lacks antennary GlcNAc residues in its otherwise identical glycans. Root.

Its subcellular location is the secreted. It localises to the extracellular space. The protein localises to the apoplast. The protein resides in the cell wall. The enzyme catalyses oxalate + O2 + 2 H(+) = H2O2 + 2 CO2. In terms of biological role, releases hydrogen peroxide in the apoplast. May play an important role in several aspects of plant growth and defense mechanisms. This is Oxalate oxidase 2 from Hordeum vulgare (Barley).